Consider the following 331-residue polypeptide: Centriolar satellite-associated tubulin polyglutamylase complex regulator 1 (331 aa).

The segment at 1–111 is required for interaction with PCM1; that stretch reads MLSPERLALP…HCLLQLLCPD (111 aa). Positions 1–225 are required for interaction with TPGS1, LRRC49, and TTLL1; it reads MLSPERLALP…SCPPPALVKE (225 aa). The tract at residues 112–331 is required for interaction with TPGS2; that stretch reads FPLELTQKAA…STEETDESET (220 aa). The disordered stretch occupies residues 288 to 331; the sequence is SPEASCLPSRTPPRVGSPWRPLHHSRKVDGESDGSTEETDESET. The span at 318-331 shows a compositional bias: acidic residues; the sequence is ESDGSTEETDESET. Phosphoserine is present on Ser319.

It belongs to the CSTPP1 family. In terms of assembly, interacts with PCM1. Interacts with TTLL1, TPGS1, TPGS2 and LRRC49; the interactions link CSTPP1 to the complex TPGC. Binds to alpha-tubulin.

It localises to the cytoplasm. The protein localises to the cytoskeleton. It is found in the microtubule organizing center. Its subcellular location is the centrosome. The protein resides in the centriolar satellite. In terms of biological role, regulator of the tubulin polyglutamylase complex (TPGC) that controls cytoskeletal organization, nuclear shape, and cilium disassembly by balancing microtubule and actin assembly. Regulates the assembly and stability of the TPGC and thereby modulates polyglutamylation of the microtubule, which antagonizes MAP4 binding. The sequence is that of Centriolar satellite-associated tubulin polyglutamylase complex regulator 1 from Homo sapiens (Human).